A 481-amino-acid polypeptide reads, in one-letter code: Probable myosin light chain kinase DDB_G0284661 (481 aa).

Residues 13-269 enclose the Protein kinase domain; that stretch reads YNITDIIGEG…VKQSLAHKWI (257 aa). Residues 19-27 and Lys43 contribute to the ATP site; that span reads IGEGTFSTV. The active-site Proton acceptor is the Asp136. Disordered regions lie at residues 285-315 and 345-427; these read PLITSQQQQQQSPSSLLSSSSSSTASSPSLK and SNSH…DDDE. Low complexity predominate over residues 379–421; that stretch reads SNNNINNNNDNNDNNNSNSNNSNNNINNFINNNNNNNNNNSNF.

This sequence belongs to the protein kinase superfamily. CAMK Ser/Thr protein kinase family. CaMK subfamily.

It carries out the reaction L-seryl-[myosin light chain] + ATP = O-phospho-L-seryl-[myosin light chain] + ADP + H(+). The enzyme catalyses L-threonyl-[myosin light chain] + ATP = O-phospho-L-threonyl-[myosin light chain] + ADP + H(+). Its activity is regulated as follows. Does not have a calmodulin-binding domain. In terms of biological role, may phosphorylate a specific serine in the N-terminus of a myosin light chain. The polypeptide is Probable myosin light chain kinase DDB_G0284661 (Dictyostelium discoideum (Social amoeba)).